The primary structure comprises 734 residues: Polyphosphate kinase (734 aa).

Position 67 (asparagine 67) interacts with ATP. 2 residues coordinate Mg(2+): arginine 392 and arginine 422. A PLD phosphodiesterase domain is found at 447 to 481 (THLKTHSKIALVVKRINNELTSFVHLGTGNYNDKT). Histidine 452 functions as the Phosphohistidine intermediate in the catalytic mechanism. The ATP site is built by tyrosine 485, arginine 581, and histidine 609. The interval 705-734 (KKQSVQPSGQPVHSRRGGSWMRKLKNTFKR) is disordered.

The protein belongs to the polyphosphate kinase 1 (PPK1) family. Requires Mg(2+) as cofactor. Post-translationally, an intermediate of this reaction is the autophosphorylated ppk in which a phosphate is covalently linked to a histidine residue through a N-P bond.

The catalysed reaction is [phosphate](n) + ATP = [phosphate](n+1) + ADP. Its function is as follows. Catalyzes the reversible transfer of the terminal phosphate of ATP to form a long-chain polyphosphate (polyP). The chain is Polyphosphate kinase from Staphylococcus epidermidis (strain ATCC 12228 / FDA PCI 1200).